Consider the following 776-residue polypeptide: General transcription and DNA repair factor IIH helicase subunit XPD (776 aa).

The Helicase ATP-binding domain maps to 7-277 (DLLVYFPYSY…KKVDEKRLKD (271 aa)). 42 to 49 (MPSGTGKT) provides a ligand contact to ATP. [4Fe-4S] cluster is bound by residues cysteine 115, cysteine 133, cysteine 150, and cysteine 184. Positions 228–231 (DEAH) match the DEAH box motif. The segment at 736–776 (HVEKQSTSKPPQQQNSAINSTITTSTTTTTTTSTISETHLT) is disordered. Positions 742–754 (TSKPPQQQNSAIN) are enriched in polar residues. A compositionally biased stretch (low complexity) spans 755–776 (STITTSTTTTTTTSTISETHLT).

The protein belongs to the helicase family. RAD3/XPD subfamily. Component of the 7-subunit TFIIH core complex composed of XPB/repB, XPD/repD, gtf2h1, gtf2h2, gtf2h3, gtf2h4 and gtf2h5, which is active in NER. The core complex associates with the 3-subunit CDK-activating kinase (CAK) module composed of cycH/cyclin H, cdk7 and mnat1 to form the 10-subunit holoenzyme (holo-TFIIH) active in transcription. Requires Mg(2+) as cofactor. [4Fe-4S] cluster is required as a cofactor.

It localises to the nucleus. It catalyses the reaction Couples ATP hydrolysis with the unwinding of duplex DNA at the replication fork by translocating in the 5'-3' direction. This creates two antiparallel DNA single strands (ssDNA). The leading ssDNA polymer is the template for DNA polymerase III holoenzyme which synthesizes a continuous strand.. It carries out the reaction ATP + H2O = ADP + phosphate + H(+). Functionally, ATP-dependent 5'-3' DNA helicase, component of the general transcription and DNA repair factor IIH (TFIIH) core complex, which is involved in general and transcription-coupled nucleotide excision repair (NER) of damaged DNA and, when complexed to CDK-activating kinase (CAK), in transcription by RNA polymerase II. In NER, TFIIH acts by opening DNA around the lesion to allow the excision of the damaged oligonucleotide and its replacement by a new DNA fragment. The ATP-dependent helicase activity of XPD/repD is required for DNA opening. In transcription, TFIIH has an essential role in transcription initiation. When the pre-initiation complex (PIC) has been established, TFIIH is required for promoter opening and promoter escape. Phosphorylation of the C-terminal tail (CTD) of the largest subunit of RNA polymerase II by the kinase module CAK controls the initiation of transcription. XPD/repD acts by forming a bridge between CAK and the core-TFIIH complex. This Dictyostelium discoideum (Social amoeba) protein is General transcription and DNA repair factor IIH helicase subunit XPD.